Reading from the N-terminus, the 184-residue chain is Ferredoxin-thioredoxin reductase subunit A2, chloroplastic (184 aa).

A chloroplast-targeting transit peptide spans M1–R71.

The protein belongs to the ferredoxin thioredoxin reductase alpha subunit family. As to quaternary structure, heterodimer of subunit A (variable subunit) and subunit B (catalytic subunit). Heterodimeric FTR forms a complex with ferredoxin and thioredoxin.

Its subcellular location is the plastid. It localises to the chloroplast. In terms of biological role, variable subunit of the ferredoxin-thioredoxin reductase (FTR), which catalyzes the two-electron reduction of thioredoxins by the electrons provided by reduced ferredoxin. This is Ferredoxin-thioredoxin reductase subunit A2, chloroplastic from Arabidopsis thaliana (Mouse-ear cress).